The following is a 147-amino-acid chain: Peptide methionine sulfoxide reductase MsrA (147 aa).

Residue Cys-10 is part of the active site.

It belongs to the MsrA Met sulfoxide reductase family.

It catalyses the reaction L-methionyl-[protein] + [thioredoxin]-disulfide + H2O = L-methionyl-(S)-S-oxide-[protein] + [thioredoxin]-dithiol. The catalysed reaction is [thioredoxin]-disulfide + L-methionine + H2O = L-methionine (S)-S-oxide + [thioredoxin]-dithiol. Its function is as follows. Has an important function as a repair enzyme for proteins that have been inactivated by oxidation. Catalyzes the reversible oxidation-reduction of methionine sulfoxide in proteins to methionine. The sequence is that of Peptide methionine sulfoxide reductase MsrA from Pelagibacter ubique (strain HTCC1062).